Here is a 354-residue protein sequence, read N- to C-terminus: Probable L-ascorbate-6-phosphate lactonase UlaG (354 aa).

The protein belongs to the UlaG family. A divalent metal cation serves as cofactor.

It is found in the cytoplasm. It catalyses the reaction L-ascorbate 6-phosphate + H2O = 3-dehydro-L-gulonate 6-phosphate. Its pathway is cofactor degradation; L-ascorbate degradation; D-xylulose 5-phosphate from L-ascorbate: step 1/4. In terms of biological role, probably catalyzes the hydrolysis of L-ascorbate-6-P into 3-keto-L-gulonate-6-P. Is essential for L-ascorbate utilization under anaerobic conditions. The polypeptide is Probable L-ascorbate-6-phosphate lactonase UlaG (Shigella dysenteriae serotype 1 (strain Sd197)).